A 163-amino-acid polypeptide reads, in one-letter code: IQ domain-containing protein F2 (163 aa).

IQ domains follow at residues 42–71 and 98–127; these read RVIA…STWI and RERA…AIYV.

This chain is IQ domain-containing protein F2 (IQCF2), found in Bos taurus (Bovine).